The following is a 325-amino-acid chain: Phosphate acyltransferase (325 aa).

Belongs to the PlsX family. Homodimer. Probably interacts with PlsY.

Its subcellular location is the cytoplasm. The enzyme catalyses a fatty acyl-[ACP] + phosphate = an acyl phosphate + holo-[ACP]. The protein operates within lipid metabolism; phospholipid metabolism. In terms of biological role, catalyzes the reversible formation of acyl-phosphate (acyl-PO(4)) from acyl-[acyl-carrier-protein] (acyl-ACP). This enzyme utilizes acyl-ACP as fatty acyl donor, but not acyl-CoA. The polypeptide is Phosphate acyltransferase (Staphylococcus epidermidis (strain ATCC 12228 / FDA PCI 1200)).